A 161-amino-acid chain; its full sequence is Probable chemoreceptor glutamine deamidase CheD (161 aa).

This sequence belongs to the CheD family.

It catalyses the reaction L-glutaminyl-[protein] + H2O = L-glutamyl-[protein] + NH4(+). Its function is as follows. Probably deamidates glutamine residues to glutamate on methyl-accepting chemotaxis receptors (MCPs), playing an important role in chemotaxis. This Trichlorobacter lovleyi (strain ATCC BAA-1151 / DSM 17278 / SZ) (Geobacter lovleyi) protein is Probable chemoreceptor glutamine deamidase CheD.